Reading from the N-terminus, the 254-residue chain is HTH-type transcriptional regulator GolR (254 aa).

One can recognise an HTH deoR-type domain in the interval 3–58 (PFERQNKIIHLLDQNNKITVPELSRILDVSISTIRNDLSALEESGMIKKVHGGAVL). Residues 20–39 (ITVPELSRILDVSISTIRND) constitute a DNA-binding region (H-T-H motif).

In terms of biological role, involved in the glycerol metabolism. Repressor of the gol operon for glycerol metabolism. This chain is HTH-type transcriptional regulator GolR, found in Listeria innocua serovar 6a (strain ATCC BAA-680 / CLIP 11262).